The following is a 144-amino-acid chain: Peroxisomal membrane protein PEX34 (144 aa).

3 helical membrane-spanning segments follow: residues 18-30, 52-73, and 109-131; these read NIWS…LDFF, VWLC…KLCK, and TAAL…RLFK.

In terms of assembly, homooligomer. Interacts with PEX11, PEX25 and PEX27.

It is found in the peroxisome membrane. Functionally, in concert with the three peroxisome divisional factors, PEX11, PEX25 and PEX27, controls peroxisome morphology and abundance under conditions of peroxisome proliferation. Maintains mature peroxisomes in actively dividing cells. This is Peroxisomal membrane protein PEX34 (PEX34) from Saccharomyces cerevisiae (strain ATCC 204508 / S288c) (Baker's yeast).